The primary structure comprises 345 residues: L-threonine 3-dehydrogenase (345 aa).

C39 is a binding site for Zn(2+). Active-site charge relay system residues include T41 and H44. 6 residues coordinate Zn(2+): H64, E65, C94, C97, C100, and C108. NAD(+) is bound by residues I176, D196, R201, 263 to 265, and 287 to 288; these read LGI and VY.

It belongs to the zinc-containing alcohol dehydrogenase family. Homotetramer. It depends on Zn(2+) as a cofactor.

The protein localises to the cytoplasm. The catalysed reaction is L-threonine + NAD(+) = (2S)-2-amino-3-oxobutanoate + NADH + H(+). It participates in amino-acid degradation; L-threonine degradation via oxydo-reductase pathway; glycine from L-threonine: step 1/2. In terms of biological role, catalyzes the NAD(+)-dependent oxidation of L-threonine to 2-amino-3-ketobutyrate. This Anaeromyxobacter dehalogenans (strain 2CP-1 / ATCC BAA-258) protein is L-threonine 3-dehydrogenase.